The chain runs to 423 residues: Gamma-glutamyl phosphate reductase (423 aa).

The protein belongs to the gamma-glutamyl phosphate reductase family.

Its subcellular location is the cytoplasm. The catalysed reaction is L-glutamate 5-semialdehyde + phosphate + NADP(+) = L-glutamyl 5-phosphate + NADPH + H(+). Its pathway is amino-acid biosynthesis; L-proline biosynthesis; L-glutamate 5-semialdehyde from L-glutamate: step 2/2. Functionally, catalyzes the NADPH-dependent reduction of L-glutamate 5-phosphate into L-glutamate 5-semialdehyde and phosphate. The product spontaneously undergoes cyclization to form 1-pyrroline-5-carboxylate. The protein is Gamma-glutamyl phosphate reductase of Pseudomonas putida (strain ATCC 47054 / DSM 6125 / CFBP 8728 / NCIMB 11950 / KT2440).